A 657-amino-acid chain; its full sequence is Pyoverdine export ATP-binding/permease protein PvdT (657 aa).

The ABC transporter domain occupies 6–245; that stretch reads IDLQDIRKSY…ASTNPGALQA (240 aa). Position 43–50 (43–50) interacts with ATP; it reads GASGSGKS. Transmembrane regions (helical) follow at residues 285-305, 539-559, 590-610, and 620-640; these read ALTLLGIIIGVASVVVMLAVG, IAAISLLVGGIGVMNIMLMTV, LSVVGGIAGIGLALLVGGVLI, and LVAIAGAFACALITGVVFGFM.

The protein belongs to the ABC transporter superfamily. Macrolide exporter (TC 3.A.1.122) family. As to quaternary structure, part of the tripartite efflux system PvdRT-OpmQ, which is composed of an inner membrane component with both ATPase and permease domains, PvdT, a periplasmic membrane fusion protein, PvdR, and an outer membrane component, OpmQ.

The protein localises to the cell inner membrane. In terms of biological role, part of the tripartite efflux system PvdRT-OpmQ required for the secretion into the extracellular milieu of the siderophore pyoverdine (PVD), which is involved in iron acquisition. This subunit binds PVD and drives its secretion by hydrolyzing ATP. The system is responsible for export of newly synthesized PVD after the final steps of biosynthesis have taken place in the periplasm. It is also responsible for recycling of PVD after internalization of ferri-PVD into the periplasm by the outer-membrane receptor FpvA and release of iron from PVD, thus making PVD available for new cycles of iron uptake. In Pseudomonas fluorescens (strain Pf0-1), this protein is Pyoverdine export ATP-binding/permease protein PvdT.